The chain runs to 405 residues: Protein held out wings (405 aa).

The region spanning 142-210 (YVPVREHPDF…HLSDDLHVLI (69 aa)) is the KH domain.

As to quaternary structure, homodimer. Interacts with Sxl; promoting nuclear retention of msl-2 transcripts. During embryogenesis, expression is seen in mesodermal precursors of somatic, visceral and pharyngeal muscle. Later in embryogenesis, expression is restricted to heart and muscle attachment sites of the epidermis. During onset of metamorphosis, expression is seen in muscle and muscle attachment cells.

The protein localises to the nucleus. In terms of biological role, RNA-binding protein involved in muscle development and dosage compensation. Vital role in steroid regulation of muscle development and to control heart rate. Required during embryogenesis, in late stages of somatic muscle development, for myotube migration and during metamorphosis for muscle reorganization. Required for integrin-mediated cell-adhesion in wing blade. Together with Sxl, acts as an inhibitor of dosage compensation in females by preventing production of msl-2 protein, an essential component of the MSL complex. Specifically binds to the 5'-UTR of msl-2 transcripts and cooperates with Sxl to promote nuclear retention of msl-2 mRNAs. The polypeptide is Protein held out wings (how) (Drosophila melanogaster (Fruit fly)).